Consider the following 358-residue polypeptide: Dynein axonemal assembly factor 10 (358 aa).

6 WD repeats span residues 64-106 (EKPK…TPVY), 116-155 (NCID…TPVA), 163-206 (ETKR…VRWE), 208-250 (NIKN…PSKG), 258-298 (AHKS…QRSR), and 320-358 (LSTQ…LNKL).

In terms of assembly, interacts with PIH1D1; the interaction associates DNAAF10 with the R2TP complex. Interacts with several dynein axonemal assembly factors.

The protein resides in the dynein axonemal particle. Functionally, key assembly factor specifically required for the stability of axonemal dynein heavy chains in cytoplasm. In Xenopus tropicalis (Western clawed frog), this protein is Dynein axonemal assembly factor 10 (dnaaf10).